Consider the following 294-residue polypeptide: Shikimate dehydrogenase (NADP(+)) (294 aa).

Residues 22 to 24 (SLS) and Ser69 each bind shikimate. Residue Lys73 is the Proton acceptor of the active site. Residues Asn94 and Asp111 each contribute to the shikimate site. NADP(+) contacts are provided by residues 135 to 139 (GAGGA) and Leu236. Tyr238 is a binding site for shikimate. Residue Gly260 coordinates NADP(+).

Belongs to the shikimate dehydrogenase family. As to quaternary structure, homodimer.

The catalysed reaction is shikimate + NADP(+) = 3-dehydroshikimate + NADPH + H(+). It functions in the pathway metabolic intermediate biosynthesis; chorismate biosynthesis; chorismate from D-erythrose 4-phosphate and phosphoenolpyruvate: step 4/7. Involved in the biosynthesis of the chorismate, which leads to the biosynthesis of aromatic amino acids. Catalyzes the reversible NADPH linked reduction of 3-dehydroshikimate (DHSA) to yield shikimate (SA). This chain is Shikimate dehydrogenase (NADP(+)), found in Streptococcus equi subsp. zooepidemicus (strain H70).